A 96-amino-acid chain; its full sequence is Salivary protein FS50 (96 aa).

Residues 1–19 form the signal peptide; the sequence is MKWILVLALVCLAVEYSYS. 4 disulfide bridges follow: Cys-26–Cys-71, Cys-50–Cys-78, Cys-63–Cys-91, and Cys-67–Cys-93.

It is found in the secreted. Its function is as follows. Salivary protein that inhibits host voltage-gated sodium channel Nav1.5/SCN5A. This chain is Salivary protein FS50, found in Xenopsylla cheopis (Oriental rat flea).